A 315-amino-acid polypeptide reads, in one-letter code: Lipoyl synthase (315 aa).

Cys63, Cys68, Cys74, Cys89, Cys93, Cys96, and Ser303 together coordinate [4Fe-4S] cluster. A Radical SAM core domain is found at 75 to 292 (FSKGTATFMI…EEKAYEMGFV (218 aa)).

This sequence belongs to the radical SAM superfamily. Lipoyl synthase family. Requires [4Fe-4S] cluster as cofactor.

It is found in the cytoplasm. It catalyses the reaction [[Fe-S] cluster scaffold protein carrying a second [4Fe-4S](2+) cluster] + N(6)-octanoyl-L-lysyl-[protein] + 2 oxidized [2Fe-2S]-[ferredoxin] + 2 S-adenosyl-L-methionine + 4 H(+) = [[Fe-S] cluster scaffold protein] + N(6)-[(R)-dihydrolipoyl]-L-lysyl-[protein] + 4 Fe(3+) + 2 hydrogen sulfide + 2 5'-deoxyadenosine + 2 L-methionine + 2 reduced [2Fe-2S]-[ferredoxin]. It participates in protein modification; protein lipoylation via endogenous pathway; protein N(6)-(lipoyl)lysine from octanoyl-[acyl-carrier-protein]: step 2/2. Functionally, catalyzes the radical-mediated insertion of two sulfur atoms into the C-6 and C-8 positions of the octanoyl moiety bound to the lipoyl domains of lipoate-dependent enzymes, thereby converting the octanoylated domains into lipoylated derivatives. In Chromobacterium violaceum (strain ATCC 12472 / DSM 30191 / JCM 1249 / CCUG 213 / NBRC 12614 / NCIMB 9131 / NCTC 9757 / MK), this protein is Lipoyl synthase.